The sequence spans 183 residues: Apo-citrate lyase phosphoribosyl-dephospho-CoA transferase (183 aa).

The protein belongs to the CitX family.

It carries out the reaction apo-[citrate lyase ACP] + 2'-(5''-triphospho-alpha-D-ribosyl)-3'-dephospho-CoA = holo-[citrate lyase ACP] + diphosphate. Functionally, transfers 2-(5''-triphosphoribosyl)-3'-dephosphocoenzyme-A on a serine residue to the apo-acyl carrier protein (gamma chain) of the citrate lyase to yield holo-acyl carrier protein. This chain is Apo-citrate lyase phosphoribosyl-dephospho-CoA transferase, found in Escherichia coli O9:H4 (strain HS).